We begin with the raw amino-acid sequence, 137 residues long: Envelope glycoprotein L (137 aa).

The first 25 residues, Met-1–Ala-25, serve as a signal peptide directing secretion. The interaction with gH stretch occupies residues Asn-23–Leu-128. 2 disulfide bridges follow: Cys-28–Cys-56 and Cys-29–Cys-79.

It belongs to the herpesviridae glycoprotein L family. In terms of assembly, interacts with glycoprotein H (gH); this interaction is necessary for the correct processing and cell surface expression of gH. The heterodimer gH/gL seems to interact with gB trimers during fusion. The heterodimer gH/gL interacts with host EPHA2 to facilitate virus internalization and fusion.

The protein localises to the virion membrane. It localises to the host cell membrane. The protein resides in the host Golgi apparatus. Its subcellular location is the host trans-Golgi network. Functionally, the heterodimer glycoprotein H-glycoprotein L is required for the fusion of viral and plasma membranes leading to virus entry into the host cell. Acts as a functional inhibitor of gH and maintains gH in an inhibited form. Upon binding to host integrins, gL dissociates from gH leading to activation of the viral fusion glycoproteins gB and gH. The heterodimer gH/gL targets also host EPHA2 to promote viral entry. The sequence is that of Envelope glycoprotein L from Homo sapiens (Human).